The sequence spans 348 residues: Serpentine receptor class alpha-29 (348 aa).

A run of 6 helical transmembrane segments spans residues 28-48, 108-130, 145-165, 193-213, 246-266, and 280-300; these read FILM…QTLW, FLYY…DRLF, GFIV…FWTF, INDS…FLYI, CIII…PSIF, and LILA…LIVI.

It belongs to the nematode receptor-like protein sra family.

Its subcellular location is the membrane. This chain is Serpentine receptor class alpha-29 (sra-29), found in Caenorhabditis elegans.